A 62-amino-acid polypeptide reads, in one-letter code: Cryptic Mu-phage protein com (62 aa).

This sequence belongs to the com family.

This is Cryptic Mu-phage protein com from Shigella dysenteriae.